Here is a 423-residue protein sequence, read N- to C-terminus: Protein CLP1 homolog (423 aa).

ATP-binding positions include E19, K60, and 122–127 (DVGKTT).

It belongs to the Clp1 family. Clp1 subfamily.

Its subcellular location is the nucleus. Its function is as follows. Required for endonucleolytic cleavage during polyadenylation-dependent pre-mRNA 3'-end formation. This chain is Protein CLP1 homolog (cbc), found in Anopheles gambiae (African malaria mosquito).